We begin with the raw amino-acid sequence, 274 residues long: DNA-directed RNA polymerase subunit Rpo3 (274 aa).

[3Fe-4S] cluster contacts are provided by Cys-202, Cys-205, and Cys-208.

Belongs to the archaeal Rpo3/eukaryotic RPB3 RNA polymerase subunit family. In terms of assembly, part of the RNA polymerase complex. [3Fe-4S] cluster is required as a cofactor.

It is found in the cytoplasm. It carries out the reaction RNA(n) + a ribonucleoside 5'-triphosphate = RNA(n+1) + diphosphate. Functionally, DNA-dependent RNA polymerase (RNAP) catalyzes the transcription of DNA into RNA using the four ribonucleoside triphosphates as substrates. The polypeptide is DNA-directed RNA polymerase subunit Rpo3 (Methanobrevibacter smithii (strain ATCC 35061 / DSM 861 / OCM 144 / PS)).